An 890-amino-acid chain; its full sequence is Translation initiation factor IF-2 (890 aa).

Disordered stretches follow at residues 31–164 (KLAQ…PAEP) and 189–266 (FKAP…ESLK). The segment covering 42 to 54 (SSSEKPSAKEKSV) has biased composition (basic and acidic residues). Residues 55 to 72 (KVALAATSTPTASAEQAS) show a composition bias toward low complexity. Positions 114-128 (PEPELEVVDEVCDES) are enriched in acidic residues. Composition is skewed to basic and acidic residues over residues 149-163 (PQEKELEPKPVKPAE) and 242-266 (PKRDAGKKNLTDFRDRSKKSDESLK). The tr-type G domain occupies 395 to 564 (IRSPIVAFMG…ALQAEVLELK (170 aa)). The interval 404–411 (GHVDHGKT) is G1. 404 to 411 (GHVDHGKT) contributes to the GTP binding site. The tract at residues 429-433 (AITQH) is G2. A G3 region spans residues 450-453 (DTPG). Residues 450-454 (DTPGH) and 504-507 (NKCD) each bind GTP. A G4 region spans residues 504–507 (NKCD). The segment at 540-542 (SAK) is G5.

The protein belongs to the TRAFAC class translation factor GTPase superfamily. Classic translation factor GTPase family. IF-2 subfamily.

The protein localises to the cytoplasm. Its function is as follows. One of the essential components for the initiation of protein synthesis. Protects formylmethionyl-tRNA from spontaneous hydrolysis and promotes its binding to the 30S ribosomal subunits. Also involved in the hydrolysis of GTP during the formation of the 70S ribosomal complex. In Chlamydia pneumoniae (Chlamydophila pneumoniae), this protein is Translation initiation factor IF-2 (infB).